The primary structure comprises 579 residues: MFS-type transporter olcL (579 aa).

A compositionally biased stretch (polar residues) spans 1 to 24; sequence MANIGGSNAVSSAQGSQISDSPTT. The tract at residues 1 to 75 is disordered; the sequence is MANIGGSNAV…GFGEDGCQSD (75 aa). Over residues 25–35 the composition is skewed to basic and acidic residues; that stretch reads VDDRLDEHKET. Polar residues predominate over residues 36–54; the sequence is STQSIDHSENITQSPTSLQ. N-linked (GlcNAc...) asparagine glycosylation occurs at Asn-45. A run of 9 helical transmembrane segments spans residues 85-105, 121-141, 159-179, 183-203, 214-234, 241-261, 282-302, 310-330, and 355-375; these read LAAIMIGVCLAVFSMALDNTI, GDVGWYGSVYPLTNCCLTLVF, AVFEIGSLICGATPSSLGLII, IAGLGSSGIYLGSMIILSQSV, LVGGLYGVAGVAGPLLGGAFT, WCFYINPLFGAVTALFILLFF, LIGLFFFLPGMISLLLALQWG, SGRIIGLFVCSICLLSIFIMV, and LFNFCITGSFLVFSYYLPVWF. Asn-380 is a glycosylation site (N-linked (GlcNAc...) asparagine). The next 5 helical transmembrane spans lie at 388 to 408, 411 to 431, 439 to 459, 479 to 501, and 553 to 573; these read LMNLPMLLGVILCSIISGYGV, IGYYTPFMYAAPIVSAIGAGL, FGPSQWIGYQALYGIGLGLGL, IAIVTFIQSLGGSVSVSIAQNVF, and FYVGAAFSVLAMIGALPIQWI.

The protein belongs to the major facilitator superfamily. TCR/Tet family.

The protein resides in the peroxisome membrane. MFS-type transporter; part of the gene cluster that mediates the biosynthesis of 15-deoxyoxalicine B. The first step of the pathway is the synthesis of nicotinyl-CoA from nicotinic acid by the nicotinic acid-CoA ligase olcI. Nicotinyl-CoA is then a substrate of polyketide synthase olcA to produce 4-hydroxy-6-(3-pyridinyl)-2H-pyran-2-one (HPPO) which is further prenylated by the polyprenyl transferase olcH to yield geranylgeranyl-HPPO. Geranylgeranyl pyrophosphate is provided by the cluster-specific geranylgeranyl pyrophosphate synthase olcC. The FAD-dependent monooxygenase olcE catalyzes the epoxidation of geranylgeranyl-HPPO and the terpene cyclase olcD catalyzes the cyclization of the terpenoid component, resulting in the formation of the tricyclic terpene moiety seen in predecaturin E. The cytochrome P450 monooxygenase then catalyzes the allylic oxidation of predecaturin E, which is followed by spirocylization with concomitant loss of one molecule of water to form decaturin E. Decaturin E is the substrate of the cytochrome P450 monooxygenase olcJ which hydroxylates it at the C-29 position to form decaturin F. The short-chain dehydrogenase/reductase olcF may catalyze the oxidation of decaturin F to generate the 29-hydroxyl-27-one intermediate, and subsequent hemiacetal formation probably leads to the formation of decaturin C. The dioxygenase olcK may be a peroxisomal enzyme that catalyzes the hydroxylation of decaturin C into decaturin A once decaturin C is shuttled into the peroxisome by the MFS transporter olcL. Finally the cytochrome P450 monooxygenase olcB catalyzes the oxidative rearrangement to yield 15-deoxyoxalicine B. In the absence of olcJ, decaturin E may be shunted to a pathway in which it is oxidized to a ketone, possibly by olcF, to form decaturin D, which undergoes further allylic oxidation to yield decaturin G. Moreover, in the absence of oclK or oclL, oclB can convert decaturin C into 15-deoxyoxalicine A. This is MFS-type transporter olcL from Penicillium canescens.